Consider the following 428-residue polypeptide: Glutamyl-tRNA reductase (428 aa).

Residues 49-52 (TCNR), Ser109, 114-116 (EGQ), and Gln120 each bind substrate. Cys50 functions as the Nucleophile in the catalytic mechanism. 189–194 (GAGKMA) contacts NADP(+).

It belongs to the glutamyl-tRNA reductase family. As to quaternary structure, homodimer.

It carries out the reaction (S)-4-amino-5-oxopentanoate + tRNA(Glu) + NADP(+) = L-glutamyl-tRNA(Glu) + NADPH + H(+). The protein operates within porphyrin-containing compound metabolism; protoporphyrin-IX biosynthesis; 5-aminolevulinate from L-glutamyl-tRNA(Glu): step 1/2. It functions in the pathway porphyrin-containing compound metabolism; chlorophyll biosynthesis. Functionally, catalyzes the NADPH-dependent reduction of glutamyl-tRNA(Glu) to glutamate 1-semialdehyde (GSA). The polypeptide is Glutamyl-tRNA reductase (Rippkaea orientalis (strain PCC 8801 / RF-1) (Cyanothece sp. (strain PCC 8801))).